We begin with the raw amino-acid sequence, 343 residues long: L-threonine 3-dehydrogenase (343 aa).

Zn(2+) is bound at residue cysteine 40. Catalysis depends on charge relay system residues threonine 42 and histidine 45. Zn(2+) contacts are provided by histidine 65, glutamate 66, cysteine 95, cysteine 98, cysteine 101, and cysteine 109. NAD(+)-binding positions include isoleucine 177, aspartate 197, arginine 202, 264 to 266 (LGI), and 288 to 289 (IY).

The protein belongs to the zinc-containing alcohol dehydrogenase family. Homotetramer. Zn(2+) is required as a cofactor.

It is found in the cytoplasm. It catalyses the reaction L-threonine + NAD(+) = (2S)-2-amino-3-oxobutanoate + NADH + H(+). It participates in amino-acid degradation; L-threonine degradation via oxydo-reductase pathway; glycine from L-threonine: step 1/2. In terms of biological role, catalyzes the NAD(+)-dependent oxidation of L-threonine to 2-amino-3-ketobutyrate. The chain is L-threonine 3-dehydrogenase from Photobacterium profundum (strain SS9).